The sequence spans 395 residues: MTGGGPSSNNSSQPEEVCLVCSDISTGYHYGVPSCNGCKTFFRRTIMKNQTFSCQFQGKCPVDKSIRCACRHCRFEKCLQVGMDRNAIQQNRDPIGYTKRTRRYPPIKKVEASDECSPAMVSENDRSEDNFLTLLSSTEQKCCALRLAEYMPSRTLIEAVVSDCLLTDEVFMAEHAILSPRHRVTSLRFANQSDYHYWHERDWFVMIEWAKTLPVFQSLPFTDKLALLRHSAITYPSLVHVFNSPDHGLDTIVFPDGAYFDRTPEPTRPLGFNKKKYQMLDQLLKPMRSMEIDMTEFAAFKAIFFLNPDADDVDSNAKKTLSDGRSAITNALYRYMVKKKGAEDAGDRFGRLLLLGTVLATMAVEMKEAVLVADFFDQIQFSTFAKQLLFGIKTE.

A DNA-binding region (nuclear receptor) is located at residues 15-90 (EEVCLVCSDI…VGMDRNAIQQ (76 aa)). NR C4-type zinc fingers lie at residues 18 to 38 (CLVCSDISTGYHYGVPSCNGC) and 54 to 78 (CQFQGKCPVDKSIRCACRHCRFEKC). The region spanning 152–392 (PSRTLIEAVV…TFAKQLLFGI (241 aa)) is the NR LBD domain.

The protein belongs to the nuclear hormone receptor family.

It localises to the nucleus. Functionally, probable transcription factor that acts in a feed-forward loop with nhr-68 to activate genes involved in the vitamin B12-independent breakdown of the short-chain fatty acid propionate. This pathway is triggered in response to a diet low in vitamin B12, when canonical vitamin B12-dependent propionate breakdown cannot function; the resulting accumulation of propionate is probably sensed by nhr-10 and/or nhr-68. This is Nuclear hormone receptor family member nhr-10 (nhr-10) from Caenorhabditis elegans.